The chain runs to 270 residues: Regulatory protein RecX (270 aa).

Belongs to the RecX family.

It localises to the cytoplasm. Functionally, modulates RecA activity. This chain is Regulatory protein RecX, found in Bacillus cereus (strain B4264).